A 611-amino-acid polypeptide reads, in one-letter code: POU domain, class 6, transcription factor 1 (611 aa).

The interval 62-93 (ASQAAGEAGPDNLGSSAEATVKSPPGIPPSPA) is disordered. The POU-specific domain occupies 449 to 523 (EDGINLEEIR…VLEKWLNEAE (75 aa)). Residues 544-603 (KRKRRTSFTPQAIEALNAYFEKNPLPTGQEITEIAKELNYDREVVRVWFCNRRQTLKNTS) constitute a DNA-binding region (homeobox).

The protein belongs to the POU transcription factor family. Class-6 subfamily. In terms of tissue distribution, in the embryo, expressed exclusively in the developing brain, whereas in the adult its expression is restricted to brain, heart, skeletal muscle and lung. In the brain, the highest expression levels are found in specific cell layers of the cortex, the olfactory bulb, the hippocampus and the cerebellum.

The protein localises to the nucleus. Its function is as follows. Transcription factor that binds preferentially to a variant of the octamer motif (5'-ATGATAAT-3'). This is POU domain, class 6, transcription factor 1 (POU6F1) from Homo sapiens (Human).